The sequence spans 692 residues: E3 ubiquitin-protein ligase brl1 (692 aa).

Residues 302 to 370 are a coiled coil; sequence SNEEKIESIN…RNERDSLVAK (69 aa). The RING-type zinc-finger motif lies at 639-679; sequence CSVCNFSNWKSKLIPNCGHAFCSNCMEPFYEHKTSTCPQCE.

The protein belongs to the BRE1 family. As to quaternary structure, component of the histone H2B ubiquitin ligase complex (HULC) composed of at least brl1, brl2, rhp6 and shf1.

Its subcellular location is the nucleus. It carries out the reaction S-ubiquitinyl-[E2 ubiquitin-conjugating enzyme]-L-cysteine + [acceptor protein]-L-lysine = [E2 ubiquitin-conjugating enzyme]-L-cysteine + N(6)-ubiquitinyl-[acceptor protein]-L-lysine.. It participates in protein modification; protein ubiquitination. E3 ubiquitin-protein ligase which belongs to the histone H2B ubiquitin ligase complex (HULC) which mediates monoubiquitination of histone H2B to form H2BK123ub1. H2BK123ub1 gives a specific tag for epigenetic transcriptional activation and is also a prerequisite for H3K4me and H3K79me formation. This Schizosaccharomyces pombe (strain 972 / ATCC 24843) (Fission yeast) protein is E3 ubiquitin-protein ligase brl1 (brl1).